Here is a 382-residue protein sequence, read N- to C-terminus: ATP phosphoribosyltransferase regulatory subunit (382 aa).

The protein belongs to the class-II aminoacyl-tRNA synthetase family. HisZ subfamily. In terms of assembly, heteromultimer composed of HisG and HisZ subunits.

The protein localises to the cytoplasm. It functions in the pathway amino-acid biosynthesis; L-histidine biosynthesis; L-histidine from 5-phospho-alpha-D-ribose 1-diphosphate: step 1/9. In terms of biological role, required for the first step of histidine biosynthesis. May allow the feedback regulation of ATP phosphoribosyltransferase activity by histidine. The protein is ATP phosphoribosyltransferase regulatory subunit of Acidovorax sp. (strain JS42).